The chain runs to 260 residues: Small ribosomal subunit protein uS2 (260 aa).

The span at 228–240 (RKETKAENAEEAM) shows a compositional bias: basic and acidic residues. The segment at 228 to 260 (RKETKAENAEEAMKQAAEAEAEAAAPAAEESAE) is disordered. Over residues 241–260 (KQAAEAEAEAAAPAAEESAE) the composition is skewed to low complexity.

Belongs to the universal ribosomal protein uS2 family.

This is Small ribosomal subunit protein uS2 from Oleidesulfovibrio alaskensis (strain ATCC BAA-1058 / DSM 17464 / G20) (Desulfovibrio alaskensis).